Reading from the N-terminus, the 743-residue chain is Polyribonucleotide nucleotidyltransferase (743 aa).

Mg(2+)-binding residues include Asp489 and Asp495. Positions 556 to 618 constitute a KH domain; it reads PRIEKMHIGK…PCIDAAIGMI (63 aa). An S1 motif domain is found at 628–698; that stretch reads GETYPGKITS…KTGKFKLSRK (71 aa). The segment at 704–743 is disordered; that stretch reads PEGYVEPQPRERRERREGGREGGRNFERRGGDRDHREPRG.

The protein belongs to the polyribonucleotide nucleotidyltransferase family. Mg(2+) serves as cofactor.

It localises to the cytoplasm. It catalyses the reaction RNA(n+1) + phosphate = RNA(n) + a ribonucleoside 5'-diphosphate. Its function is as follows. Involved in mRNA degradation. Catalyzes the phosphorolysis of single-stranded polyribonucleotides processively in the 3'- to 5'-direction. The protein is Polyribonucleotide nucleotidyltransferase of Porphyromonas gingivalis (strain ATCC 33277 / DSM 20709 / CIP 103683 / JCM 12257 / NCTC 11834 / 2561).